A 286-amino-acid chain; its full sequence is 4-hydroxybenzoate octaprenyltransferase (286 aa).

7 helical membrane passes run G21–M40, I95–V115, F142–V162, W167–V187, Q210–A230, L235–F255, and F266–I286.

It belongs to the UbiA prenyltransferase family. Mg(2+) serves as cofactor.

It is found in the cell inner membrane. The enzyme catalyses all-trans-octaprenyl diphosphate + 4-hydroxybenzoate = 4-hydroxy-3-(all-trans-octaprenyl)benzoate + diphosphate. It functions in the pathway cofactor biosynthesis; ubiquinone biosynthesis. Its function is as follows. Catalyzes the prenylation of para-hydroxybenzoate (PHB) with an all-trans polyprenyl group. Mediates the second step in the final reaction sequence of ubiquinone-8 (UQ-8) biosynthesis, which is the condensation of the polyisoprenoid side chain with PHB, generating the first membrane-bound Q intermediate 3-octaprenyl-4-hydroxybenzoate. The sequence is that of 4-hydroxybenzoate octaprenyltransferase from Shewanella baltica (strain OS223).